A 343-amino-acid chain; its full sequence is Arginine-hydroxylase NDUFAF5, mitochondrial (343 aa).

A mitochondrion-targeting transit peptide spans 1-29; the sequence is MLRKVVLLRLCPLLGRPAVSASSGSRREV.

The protein belongs to the methyltransferase superfamily. Interacts with NDUFAF8, leading to stabilize NDUFAF5. Interacts with NDUFS7. Interacts with PYURF (via TRM112 domain); the interaction is direct and stabilizes NDUFAF5 protein.

It localises to the mitochondrion inner membrane. Functionally, arginine hydroxylase that mediates hydroxylation of 'Arg-122' of NDUFS7 and is involved in the assembly of mitochondrial NADH:ubiquinone oxidoreductase complex (complex I, MT-ND1) at early stages. May also have methyltransferase activity. In Mus musculus (Mouse), this protein is Arginine-hydroxylase NDUFAF5, mitochondrial.